The following is a 255-amino-acid chain: Menaquinol:cytochrome c reductase cytochrome c subunit (255 aa).

3 helical membrane passes run 46-62 (WMVGAVFLIGFLVLTIV), 104-124 (VVGAMIMPGLAFGALLLAPFL), and 137-157 (VAVGMMLLAISAAVFLTWQSV). In terms of domain architecture, Cytochrome c spans 178–253 (DTNAEGYKVF…ELAKFISETT (76 aa)). Heme c-binding residues include cysteine 192, cysteine 195, and histidine 196.

The protein belongs to the cytochrome b family. The main subunits of the menaquinol:cytochrome c complex are a Rieske-type iron-sulfur protein (QcrA), a cytochrome b (QcrB) and a cytochrome c (QcrC). It depends on heme c as a cofactor.

It localises to the cell membrane. Its function is as follows. Component of the menaquinol:cytochrome c reductase complex. The chain is Menaquinol:cytochrome c reductase cytochrome c subunit (qcrC) from Bacillus subtilis (strain 168).